Reading from the N-terminus, the 85-residue chain is UPF0297 protein Clos_1665 (85 aa).

Belongs to the UPF0297 family.

The polypeptide is UPF0297 protein Clos_1665 (Alkaliphilus oremlandii (strain OhILAs) (Clostridium oremlandii (strain OhILAs))).